Here is a 248-residue protein sequence, read N- to C-terminus: Large ribosomal subunit protein uL4 (248 aa).

Disordered regions lie at residues 48–96 (GTHK…PVPR) and 210–248 (AFSE…RTGA). Basic and acidic residues predominate over residues 233 to 248 (DATKARSSRHDDRTGA).

Belongs to the universal ribosomal protein uL4 family. As to quaternary structure, part of the 50S ribosomal subunit.

In terms of biological role, one of the primary rRNA binding proteins, this protein initially binds near the 5'-end of the 23S rRNA. It is important during the early stages of 50S assembly. It makes multiple contacts with different domains of the 23S rRNA in the assembled 50S subunit and ribosome. Its function is as follows. Forms part of the polypeptide exit tunnel. The sequence is that of Large ribosomal subunit protein uL4 from Tropheryma whipplei (strain Twist) (Whipple's bacillus).